Here is a 199-residue protein sequence, read N- to C-terminus: Probable NADH dehydrogenase [ubiquinone] iron-sulfur protein 7, mitochondrial (199 aa).

Residues 1–16 constitute a mitochondrion transit peptide; sequence MLSALRTAGALSTRRL. Cys-74, Cys-75, Cys-139, and Cys-169 together coordinate [4Fe-4S] cluster.

The protein belongs to the complex I 20 kDa subunit family. In terms of assembly, complex I is composed of 45 different subunits This is a component of the iron-sulfur (IP) fragment of the enzyme. It depends on [4Fe-4S] cluster as a cofactor.

It is found in the mitochondrion. It catalyses the reaction a ubiquinone + NADH + 5 H(+)(in) = a ubiquinol + NAD(+) + 4 H(+)(out). Its function is as follows. Core subunit of the mitochondrial membrane respiratory chain NADH dehydrogenase (Complex I) that is believed to belong to the minimal assembly required for catalysis. Complex I functions in the transfer of electrons from NADH to the respiratory chain. The immediate electron acceptor for the enzyme is believed to be ubiquinone. The sequence is that of Probable NADH dehydrogenase [ubiquinone] iron-sulfur protein 7, mitochondrial from Caenorhabditis briggsae.